The chain runs to 476 residues: 3-ketoacyl-CoA synthase 12 (476 aa).

The signal sequence occupies residues M1–S25. Residues K26–I313 enclose the FAE domain. Active-site residues include C168, H247, H344, H348, H377, and N381.

This sequence belongs to the thiolase-like superfamily. Chalcone/stilbene synthases family. Expressed in siliques, flowers and leaves.

Its subcellular location is the endoplasmic reticulum. The enzyme catalyses a very-long-chain acyl-CoA + malonyl-CoA + H(+) = a very-long-chain 3-oxoacyl-CoA + CO2 + CoA. It functions in the pathway lipid metabolism; fatty acid biosynthesis. This Arabidopsis thaliana (Mouse-ear cress) protein is 3-ketoacyl-CoA synthase 12.